Here is an 81-residue protein sequence, read N- to C-terminus: uncharacterized protein (81 aa).

To M.thermoautotrophicum MTH886.

This is an uncharacterized protein from Methanocaldococcus jannaschii (strain ATCC 43067 / DSM 2661 / JAL-1 / JCM 10045 / NBRC 100440) (Methanococcus jannaschii).